Here is a 281-residue protein sequence, read N- to C-terminus: Bifunctional protein FolD (281 aa).

Residues 165 to 167 (GRG), T192, and V233 each bind NADP(+).

It belongs to the tetrahydrofolate dehydrogenase/cyclohydrolase family. As to quaternary structure, homodimer.

It catalyses the reaction (6R)-5,10-methylene-5,6,7,8-tetrahydrofolate + NADP(+) = (6R)-5,10-methenyltetrahydrofolate + NADPH. It carries out the reaction (6R)-5,10-methenyltetrahydrofolate + H2O = (6R)-10-formyltetrahydrofolate + H(+). Its pathway is one-carbon metabolism; tetrahydrofolate interconversion. Catalyzes the oxidation of 5,10-methylenetetrahydrofolate to 5,10-methenyltetrahydrofolate and then the hydrolysis of 5,10-methenyltetrahydrofolate to 10-formyltetrahydrofolate. This Mycolicibacterium paratuberculosis (strain ATCC BAA-968 / K-10) (Mycobacterium paratuberculosis) protein is Bifunctional protein FolD.